Here is a 1884-residue protein sequence, read N- to C-terminus: Fatty acid synthase subunit alpha (1884 aa).

The interval 91–141 (TPDPAEPPAAEEPKAETGKESAPAASAAAAAATQPAAAVAPPPQSAGPVES) is disordered. Low complexity predominate over residues 111 to 129 (SAPAASAAAAAATQPAAAV). Positions 147-222 (VKASLLIHVL…EQFQDTFSGS (76 aa)) constitute a Carrier domain. Residue Ser-182 is modified to O-(pantetheine 4'-phosphoryl)serine. The disordered stretch occupies residues 583–613 (TEQTTQDALAIPTGSNTPTEEDELSTASDDD). Positions 584–600 (EQTTQDALAIPTGSNTP) are enriched in polar residues. Residues 601 to 613 (TEEDELSTASDDD) show a composition bias toward acidic residues. A beta-ketoacyl reductase region spans residues 677–873 (DKYVLVTGAG…CGAIIGWTRG (197 aa)). The Ketosynthase family 3 (KS3) domain occupies 1120 to 1660 (IQEVVIQHDL…QKGAQAVVVH (541 aa)). Catalysis depends on for beta-ketoacyl synthase activity residues Cys-1303, His-1545, and His-1586. Positions 1770, 1771, and 1772 each coordinate Mg(2+). Acetyl-CoA is bound by residues 1770 to 1772 (DVE), Tyr-1796, Ser-1806, 1815 to 1825 (EATFKALGVSS), 1839 to 1842 (RDGN), and 1869 to 1871 (ISH). Ser-1870 and His-1871 together coordinate Mg(2+).

This sequence belongs to the thiolase-like superfamily. Fungal fatty acid synthetase subunit alpha family. In terms of assembly, fatty acid synthase is composed of alpha and beta subunits.

The catalysed reaction is acetyl-CoA + n malonyl-CoA + 2n NADPH + 4n H(+) = a long-chain-acyl-CoA + n CoA + n CO2 + 2n NADP(+).. It carries out the reaction a fatty acyl-[ACP] + malonyl-[ACP] + H(+) = a 3-oxoacyl-[ACP] + holo-[ACP] + CO2. It catalyses the reaction a (3R)-hydroxyacyl-[ACP] + NADP(+) = a 3-oxoacyl-[ACP] + NADPH + H(+). Its function is as follows. Fatty acid synthetase catalyzes the formation of long-chain fatty acids from acetyl-CoA, malonyl-CoA and NADPH. The alpha subunit contains domains for: acyl carrier protein, 3-oxoacyl-[acyl-carrier-protein] reductase, and 3-oxoacyl-[acyl-carrier-protein] synthase. In Candida parapsilosis (strain CDC 317 / ATCC MYA-4646) (Yeast), this protein is Fatty acid synthase subunit alpha (FAS2).